The following is a 166-amino-acid chain: Deglycase PH1704 (166 aa).

In terms of domain architecture, PfpI endopeptidase spans 1–166; sequence MKVLFLTANE…WMREFVKLLK (166 aa). Cys-100 functions as the Nucleophile in the catalytic mechanism. Residue His-101 is part of the active site.

It belongs to the peptidase C56 family. In terms of assembly, homohexamer formed by a dimer of trimers that assemble into a hollow ring structure.

The protein resides in the cytoplasm. The enzyme catalyses N(omega)-(1-hydroxy-2-oxopropyl)-L-arginyl-[protein] + H2O = lactate + L-arginyl-[protein] + H(+). It catalyses the reaction N(6)-(1-hydroxy-2-oxopropyl)-L-lysyl-[protein] + H2O = lactate + L-lysyl-[protein] + H(+). The catalysed reaction is S-(1-hydroxy-2-oxopropyl)-L-cysteinyl-[protein] + H2O = lactate + L-cysteinyl-[protein] + H(+). It carries out the reaction N(omega)-(1-hydroxy-2-oxoethyl)-L-arginyl-[protein] + H2O = L-arginyl-[protein] + glycolate + H(+). The enzyme catalyses N(6)-(1-hydroxy-2-oxoethyl)-L-lysyl-[protein] + H2O = glycolate + L-lysyl-[protein] + H(+). It catalyses the reaction S-(1-hydroxy-2-oxoethyl)-L-cysteinyl-[protein] + H2O = glycolate + L-cysteinyl-[protein] + H(+). Its function is as follows. Deglycase that catalyzes the deglycation of the Maillard adducts formed between amino groups of proteins and reactive carbonyl groups of glyoxals. Thus, functions as a protein deglycase that repairs methylglyoxal- and glyoxal-glycated proteins, and releases repaired proteins and lactate or glycolate, respectively. Deglycates cysteine, arginine and lysine residues in proteins, and thus reactivates these proteins by reversing glycation by glyoxals. Acts on early glycation intermediates (hemithioacetals and aminocarbinols), preventing the formation of advanced glycation endproducts (AGE) that cause irreversible damage. Also displays proteolytic activity. The protein is Deglycase PH1704 of Pyrococcus horikoshii (strain ATCC 700860 / DSM 12428 / JCM 9974 / NBRC 100139 / OT-3).